Consider the following 249-residue polypeptide: Chitooligosaccharide deacetylase (249 aa).

Mg(2+) is bound by residues His61 and His125.

Belongs to the YdjC deacetylase family. ChbG subfamily. In terms of assembly, homodimer. It depends on Mg(2+) as a cofactor.

Its subcellular location is the cytoplasm. It catalyses the reaction N,N'-diacetylchitobiose + H2O = N-acetyl-beta-D-glucosaminyl-(1-&gt;4)-D-glucosamine + acetate. The enzyme catalyses diacetylchitobiose-6'-phosphate + H2O = N'-monoacetylchitobiose-6'-phosphate + acetate. Its pathway is glycan degradation; chitin degradation. Involved in the degradation of chitin. ChbG is essential for growth on the acetylated chitooligosaccharides chitobiose and chitotriose but is dispensable for growth on cellobiose and chitosan dimer, the deacetylated form of chitobiose. Deacetylation of chitobiose-6-P and chitotriose-6-P is necessary for both the activation of the chb promoter by the regulatory protein ChbR and the hydrolysis of phosphorylated beta-glucosides by the phospho-beta-glucosidase ChbF. Catalyzes the removal of only one acetyl group from chitobiose-6-P to yield monoacetylchitobiose-6-P, the inducer of ChbR and the substrate of ChbF. This is Chitooligosaccharide deacetylase from Escherichia coli O17:K52:H18 (strain UMN026 / ExPEC).